A 423-amino-acid polypeptide reads, in one-letter code: Deferrochelatase (423 aa).

The tat-type signal signal peptide spans Met-1–Ala-35. Heme b contacts are provided by residues Gly-236–Ala-238, His-329, Asn-334–Arg-336, and Arg-347.

It belongs to the DyP-type peroxidase family. EfeB subfamily. In terms of assembly, homodimer. Part of a ferrous iron transporter composed of EfeU, EfeO and EfeB. Requires heme b as cofactor. Predicted to be exported by the Tat system. The position of the signal peptide cleavage has not been experimentally proven.

It is found in the periplasm. The enzyme catalyses heme b + 2 H(+) = protoporphyrin IX + Fe(2+). Functionally, involved in the recovery of exogenous heme iron. Extracts iron from heme while preserving the protoporphyrin ring intact. This is Deferrochelatase (efeB) from Escherichia coli O6:H1 (strain CFT073 / ATCC 700928 / UPEC).